The primary structure comprises 476 residues: Cysteine--tRNA ligase (476 aa).

A Zn(2+)-binding site is contributed by Cys-30. The 'HIGH' region signature appears at 32 to 42 (PTVYNYIHIGN). Residues Cys-215, His-240, and Glu-244 each coordinate Zn(2+). Positions 274–278 (KMSKS) match the 'KMSKS' region motif. Lys-277 lines the ATP pocket.

The protein belongs to the class-I aminoacyl-tRNA synthetase family. In terms of assembly, monomer. Zn(2+) is required as a cofactor.

It localises to the cytoplasm. It catalyses the reaction tRNA(Cys) + L-cysteine + ATP = L-cysteinyl-tRNA(Cys) + AMP + diphosphate. This is Cysteine--tRNA ligase from Lactobacillus helveticus (strain DPC 4571).